The following is a 179-amino-acid chain: Large ribosomal subunit protein uL6 (179 aa).

The protein belongs to the universal ribosomal protein uL6 family. Part of the 50S ribosomal subunit.

This protein binds to the 23S rRNA, and is important in its secondary structure. It is located near the subunit interface in the base of the L7/L12 stalk, and near the tRNA binding site of the peptidyltransferase center. This Streptomyces griseus subsp. griseus (strain JCM 4626 / CBS 651.72 / NBRC 13350 / KCC S-0626 / ISP 5235) protein is Large ribosomal subunit protein uL6.